The sequence spans 1194 residues: F-box only protein 38 (1194 aa).

Residues methionine 30 to aspartate 75 enclose the F-box domain. The interval lysine 59 to arginine 119 is interaction with KLF7. 3 consecutive short sequence motifs (nuclear export signal) follow at residues leucine 194–valine 201, leucine 307–isoleucine 316, and leucine 451–leucine 460. Disordered stretches follow at residues alanine 487–aspartate 529, glutamate 577–serine 776, arginine 793–serine 879, and lysine 896–aspartate 915. Positions asparagine 493 to histidine 510 are enriched in low complexity. Threonine 592 bears the Phosphothreonine mark. 3 positions are modified to phosphoserine: serine 599, serine 601, and serine 607. Acidic residues predominate over residues serine 599–glutamate 609. Composition is skewed to basic and acidic residues over residues arginine 622–glycine 631 and isoleucine 683–aspartate 701. A compositionally biased stretch (low complexity) spans serine 705–serine 728. Phosphoserine occurs at positions 742 and 746. Acidic residues predominate over residues glutamate 764–alanine 774. Positions arginine 793–serine 804 are enriched in basic and acidic residues. The span at serine 855–glutamate 867 shows a compositional bias: polar residues. Positions lysine 896–threonine 906 are enriched in basic residues. The Nuclear localization signal signature appears at lysine 902–arginine 905.

As to quaternary structure, part of the SCF (SKP1-CUL1-F-box) E3 ubiquitin-protein ligase complex SCF(FBXO38) composed of CUL1, SKP1, RBX1 and FBXO38. Interacts with KLF7. Interacts with PDCD1/PD-1. In terms of tissue distribution, expressed at high levels in embryo (developing brain, spinal cord, branchial arms and limbs). Widely expressed at low levels in adult tissues, with highest expression in testis. Expressed in postmeiotic spermatids.

The protein localises to the cytoplasm. It is found in the cytosol. The protein resides in the nucleus. It functions in the pathway protein modification; protein ubiquitination. Its function is as follows. Substrate recognition component of a SCF (SKP1-CUL1-F-box protein) E3 ubiquitin-protein ligase complex which mediates the ubiquitination and subsequent proteasomal degradation of PDCD1/PD-1, thereby regulating T-cells-mediated immunity. Required for anti-tumor activity of T-cells by promoting the degradation of PDCD1/PD-1; the PDCD1-mediated inhibitory pathway being exploited by tumors to attenuate anti-tumor immunity and facilitate tumor survival. May indirectly stimulate the activity of transcription factor KLF7, a regulator of neuronal differentiation, without promoting KLF7 ubiquitination. In Mus musculus (Mouse), this protein is F-box only protein 38.